Reading from the N-terminus, the 270-residue chain is uncharacterized protein (270 aa).

Basic and acidic residues-rich tracts occupy residues 1-13 (MSEF…KDLY) and 49-73 (EVER…KEEK). 3 disordered regions span residues 1 to 76 (MSEF…KQEE), 90 to 111 (STSP…PQTE), and 204 to 270 (KKRR…FRTE). Residues 90–102 (STSPAQEEQGSST) are compositionally biased toward polar residues. The segment covering 204-216 (KKRRPGQKQRAAK) has biased composition (basic residues). Over residues 218–235 (LALERTKERDTKAREIKK) the composition is skewed to basic and acidic residues. Basic residues predominate over residues 236–253 (QLKKKFHKRGGKKNKKKV).

This is an uncharacterized protein from Saccharomyces cerevisiae (strain ATCC 204508 / S288c) (Baker's yeast).